Consider the following 117-residue polypeptide: Large ribosomal subunit protein bL20 (117 aa).

This sequence belongs to the bacterial ribosomal protein bL20 family.

Binds directly to 23S ribosomal RNA and is necessary for the in vitro assembly process of the 50S ribosomal subunit. It is not involved in the protein synthesizing functions of that subunit. The sequence is that of Large ribosomal subunit protein bL20 from Nitratidesulfovibrio vulgaris (strain DP4) (Desulfovibrio vulgaris).